We begin with the raw amino-acid sequence, 372 residues long: Glutamate 5-kinase (372 aa).

Lysine 14 provides a ligand contact to ATP. Substrate contacts are provided by serine 54, aspartate 141, and asparagine 153. Residue 173–174 participates in ATP binding; the sequence is TD. The PUA domain maps to 280–358; that stretch reads RGTLTLDEGA…DEIEKLLGYV (79 aa).

It belongs to the glutamate 5-kinase family.

Its subcellular location is the cytoplasm. The catalysed reaction is L-glutamate + ATP = L-glutamyl 5-phosphate + ADP. The protein operates within amino-acid biosynthesis; L-proline biosynthesis; L-glutamate 5-semialdehyde from L-glutamate: step 1/2. In terms of biological role, catalyzes the transfer of a phosphate group to glutamate to form L-glutamate 5-phosphate. This Stutzerimonas stutzeri (strain A1501) (Pseudomonas stutzeri) protein is Glutamate 5-kinase.